The following is a 637-amino-acid chain: Putative pentatricopeptide repeat-containing protein At5g65820 (637 aa).

PPR repeat units follow at residues 146–180, 182–216, 217–247, 251–285, 286–320, 321–355, 356–390, 391–425, 426–460, 461–495, 498–532, and 534–568; these read SIEV…NPQL, EPEL…GFEP, DEYV…MRMR, NLRY…GFEP, DIVD…GFEP, NANC…ECEA, DVVT…GLMP, SELT…EYHP, DIGI…GLSP, GVDT…GLFS, QYGT…GACE, and NVLS…DFMP. The span at 616–630 shows a compositional bias: basic and acidic residues; the sequence is QDLTEKAKSKQDREG. The tract at residues 616-637 is disordered; it reads QDLTEKAKSKQDREGKKKQRSR.

This sequence belongs to the PPR family. P subfamily.

This chain is Putative pentatricopeptide repeat-containing protein At5g65820, found in Arabidopsis thaliana (Mouse-ear cress).